We begin with the raw amino-acid sequence, 156 residues long: MTGAAVSVCLLYALSVCSACYISNCPIGGKRSIMDAPQRKCMSCGPGEQGRCFGPSICCGKDVGCWMGSPETAHCMEENYLPTPCQVGGRPCGSDTVRCASPGVCCDSEGCSADQSCFAEEEGDNQIGQSEGSNSADVILRLLHLADHTPPHRVHQ.

The N-terminal stretch at 1–19 (MTGAAVSVCLLYALSVCSA) is a signal peptide. An intrachain disulfide couples cysteine 20 to cysteine 25. At glycine 28 the chain carries Glycine amide. Cystine bridges form between cysteine 41/cysteine 85, cysteine 44/cysteine 58, cysteine 52/cysteine 75, cysteine 59/cysteine 65, cysteine 92/cysteine 105, cysteine 99/cysteine 117, and cysteine 106/cysteine 111.

It belongs to the vasopressin/oxytocin family. Seven disulfide bonds are present in neurophysin.

It is found in the secreted. In terms of biological role, isotocin causes contraction of smooth muscles. The polypeptide is Isotocin-neurophysin IT 2 (Oncorhynchus keta (Chum salmon)).